The following is a 94-amino-acid chain: Fungal defensin scedosporisin-2 (94 aa).

Positions 1 to 25 (MKFSNISIAALFTILASTAMAAPAA) are cleaved as a signal peptide. A propeptide spanning residues 26–56 (DSPDSIVAREPAPVEETYEAPSGLEKRGFGC) is cleaved from the precursor. Residues Phe-54, Gly-55, and Cys-56 each contribute to the beta-D-GlcNAc-(1-&gt;4)-Mur2Ac(oyl-L-Ala-gamma-D-Glu-L-Lys-D-Ala-D-Ala)-di-trans,octa-cis-undecaprenyl diphosphate site. 3 disulfide bridges follow: Cys-56/Cys-78, Cys-63/Cys-91, and Cys-67/Cys-93. The segment at 57 to 60 (PGSE) is interaction site with membrane interface. Position 66 (His-66) interacts with beta-D-GlcNAc-(1-&gt;4)-Mur2Ac(oyl-L-Ala-gamma-D-Glu-L-Lys-D-Ala-D-Ala)-di-trans,octa-cis-undecaprenyl diphosphate. Residues 83 to 90 (IPFVGRPR) form an interaction site with membrane interface region. Residue Cys-91 participates in beta-D-GlcNAc-(1-&gt;4)-Mur2Ac(oyl-L-Ala-gamma-D-Glu-L-Lys-D-Ala-D-Ala)-di-trans,octa-cis-undecaprenyl diphosphate binding.

The protein belongs to the invertebrate defensin family.

It is found in the secreted. The protein localises to the target cell membrane. Functionally, antibacterial peptide potently active against Gram-positive bacteria. May act by selectively inhibiting peptidoglycan biosynthesis through complex formation with the cell wall precursor lipid II (1:1 molar ratio) thus inhibiting cell wall synthesis. Shows remarkably activity against resistant isolates such as methicillin-resistant Staphylococcus aureus (MRSA) and vancomycin-resistant Enterococci (VRE) at the concentration of micromolar level. Does not act by destroying the membrane integrity, which is consistent with its nonamphiphilic architecture. Acts more rapidly than vancomycin. Shows low hemolysis and cytotoxicity and high serum stability. In vivo, is as efficient as vancomycin to protect mouse peritonitis models from MRSA infections. This Pseudallescheria apiosperma (Scedosporium apiospermum) protein is Fungal defensin scedosporisin-2.